The primary structure comprises 546 residues: CTP synthase (546 aa).

The segment at Met1–Leu266 is amidoligase domain. Ser13 serves as a coordination point for CTP. UTP is bound at residue Ser13. An ATP-binding site is contributed by Ser14–Leu19. Tyr54 is a binding site for L-glutamine. Residue Asp71 coordinates ATP. Mg(2+) is bound by residues Asp71 and Glu140. CTP contacts are provided by residues Asp147–Glu149, Lys187–Gln192, and Lys223. UTP-binding positions include Lys187–Gln192 and Lys223. One can recognise a Glutamine amidotransferase type-1 domain in the interval Asn293–Leu545. Position 357 (Ala357) interacts with L-glutamine. Cys384 (nucleophile; for glutamine hydrolysis) is an active-site residue. L-glutamine-binding positions include Phe385 to Gln388, Glu408, and Arg473. Active-site residues include His518 and Glu520.

Belongs to the CTP synthase family. As to quaternary structure, homotetramer.

It carries out the reaction UTP + L-glutamine + ATP + H2O = CTP + L-glutamate + ADP + phosphate + 2 H(+). It catalyses the reaction L-glutamine + H2O = L-glutamate + NH4(+). The catalysed reaction is UTP + NH4(+) + ATP = CTP + ADP + phosphate + 2 H(+). It participates in pyrimidine metabolism; CTP biosynthesis via de novo pathway; CTP from UDP: step 2/2. With respect to regulation, allosterically activated by GTP, when glutamine is the substrate; GTP has no effect on the reaction when ammonia is the substrate. The allosteric effector GTP functions by stabilizing the protein conformation that binds the tetrahedral intermediate(s) formed during glutamine hydrolysis. Inhibited by the product CTP, via allosteric rather than competitive inhibition. Its function is as follows. Catalyzes the ATP-dependent amination of UTP to CTP with either L-glutamine or ammonia as the source of nitrogen. Regulates intracellular CTP levels through interactions with the four ribonucleotide triphosphates. This Phenylobacterium zucineum (strain HLK1) protein is CTP synthase.